We begin with the raw amino-acid sequence, 279 residues long: Large ribosomal subunit protein uL2 (279 aa).

Disordered stretches follow at residues 29-53 (PEKS…TTRH) and 224-279 (VAMN…KKRK). Residues 253–268 (KEGRTRHPNKESDKLI) are compositionally biased toward basic and acidic residues. A compositionally biased stretch (basic residues) spans 269–279 (VRRRNAGKKRK).

The protein belongs to the universal ribosomal protein uL2 family. Part of the 50S ribosomal subunit. Forms a bridge to the 30S subunit in the 70S ribosome.

One of the primary rRNA binding proteins. Required for association of the 30S and 50S subunits to form the 70S ribosome, for tRNA binding and peptide bond formation. It has been suggested to have peptidyltransferase activity; this is somewhat controversial. Makes several contacts with the 16S rRNA in the 70S ribosome. This chain is Large ribosomal subunit protein uL2, found in Leifsonia xyli subsp. xyli (strain CTCB07).